The sequence spans 142 residues: Large ribosomal subunit protein uL13 (142 aa).

It belongs to the universal ribosomal protein uL13 family. In terms of assembly, part of the 50S ribosomal subunit.

In terms of biological role, this protein is one of the early assembly proteins of the 50S ribosomal subunit, although it is not seen to bind rRNA by itself. It is important during the early stages of 50S assembly. The sequence is that of Large ribosomal subunit protein uL13 from Pseudomonas putida (strain W619).